An 881-amino-acid polypeptide reads, in one-letter code: Envelope glycoprotein gp160 (881 aa).

The N-terminal stretch at 1–19 is a signal peptide; it reads MGCLGNQLLIAILLLSVYG. The Extracellular segment spans residues 20-696; that stretch reads IYCTQYVTVF…ASWIKYIQYG (677 aa). A glycan (N-linked (GlcNAc...) asparagine; by host) is linked at Asn-37. A disulfide bond links Cys-44 and Cys-57. N-linked (GlcNAc...) asparagine; by host glycans are attached at residues Asn-70, Asn-114, Asn-148, Asn-158, Asn-186, Asn-200, Asn-204, Asn-214, Asn-246, Asn-249, Asn-280, Asn-286, Asn-297, Asn-308, Asn-318, Asn-373, and Asn-379. 5 cysteine pairs are disulfide-bonded: Cys-101-Cys-222, Cys-108-Cys-213, Cys-113-Cys-170, Cys-235-Cys-265, and Cys-245-Cys-257. Positions 113-169 are V1; that stretch reads CNKSETDRWGLTKSSTTITTAAPTSAPVSEKIDMVNETSSCIAQNNCTGLEQEQMIS. A V2 region spans residues 170–213; it reads CKFTMTGLKRDKTKEYNETWYSTDLVCEQGNSTDNESRCYMNHC. Positions 313-345 are V3; it reads CRRPGNKTVLPVTIMSGLVFHSQPLTDRPKQAW. A disulfide bond links Cys-313 and Cys-346. 2 disulfides stabilise this stretch: Cys-397/Cys-461 and Cys-404/Cys-434. Positions 404-434 are V4; that stretch reads CKMNWFLNWVEDRDVTTQRPKERHRRNYVPC. N-linked (GlcNAc...) asparagine; by host glycans are attached at residues Asn-462 and Asn-478. Residues 477-484 are V5; the sequence is GNQTSITM. A fusion peptide region spans residues 528 to 548; the sequence is GVFVLGFLGFLATAGSAMGAA. Residues 591 to 607 are immunosuppression; the sequence is LQTRVTAIEKYLEDQAQ. 3 N-linked (GlcNAc...) asparagine; by host glycosylation sites follow: Asn-627, Asn-636, and Asn-652. Residues 636–668 adopt a coiled-coil conformation; it reads NDTWQEWERKVDFLEENITALLEEAQIQQEKNM. The interval 673-694 is MPER; binding to GalCer; it reads KLNSWDVFGNWFDLASWIKYIQ. A helical transmembrane segment spans residues 697–717; that stretch reads IYVVVGVILLRIVIYIVQMLA. Over 718–881 the chain is Cytoplasmic; sequence KLRQGYRPVF…IRQGLELTLL (164 aa). The short motif at 723-726 is the YXXV motif; contains endocytosis signal element; the sequence is YRPV. A disordered region spans residues 737-761; that stretch reads THTQQDPALPTREGKEGDGGEGGGN. The S-palmitoyl cysteine; by host moiety is linked to residue Cys-789. Residues 880–881 carry the Di-leucine internalization motif motif; the sequence is LL.

As to quaternary structure, the mature envelope protein (Env) consists of a homotrimer of non-covalently associated gp120-gp41 heterodimers. The resulting complex protrudes from the virus surface as a spike. Interacts with host CD4 and CCR5. Gp120 also interacts with the C-type lectins CD209/DC-SIGN and CLEC4M/DC-SIGNR (collectively referred to as DC-SIGN(R)). The mature envelope protein (Env) consists of a homotrimer of non-covalently associated gp120-gp41 heterodimers. The resulting complex protrudes from the virus surface as a spike. Post-translationally, specific enzymatic cleavages in vivo yield mature proteins. Envelope glycoproteins are synthesized as an inactive precursor that is heavily N-glycosylated and processed likely by host cell furin in the Golgi to yield the mature SU and TM proteins. The cleavage site between SU and TM requires the minimal sequence [KR]-X-[KR]-R. Palmitoylation of the transmembrane protein and of Env polyprotein (prior to its proteolytic cleavage) is essential for their association with host cell membrane lipid rafts. Palmitoylation is therefore required for envelope trafficking to classical lipid rafts, but not for viral replication.

The protein localises to the virion membrane. The protein resides in the host cell membrane. It localises to the host endosome membrane. Functionally, the surface protein gp120 (SU) attaches the virus to the host lymphoid cell by binding to the primary receptor CD4. This interaction induces a structural rearrangement creating a high affinity binding site for a chemokine coreceptor like CCR5. This peculiar 2 stage receptor-interaction strategy allows gp120 to maintain the highly conserved coreceptor-binding site in a cryptic conformation, protected from neutralizing antibodies. These changes are transmitted to the transmembrane protein gp41 and are thought to activate its fusogenic potential by unmasking its fusion peptide. Its function is as follows. Surface protein gp120 (SU) may target the virus to gut-associated lymphoid tissue (GALT) by binding host ITGA4/ITGB7 (alpha-4/beta-7 integrins), a complex that mediates T-cell migration to the GALT. Interaction between gp120 and ITGA4/ITGB7 would allow the virus to enter GALT early in the infection, infecting and killing most of GALT's resting CD4+ T-cells. This T-cell depletion is believed to be the major insult to the host immune system leading to AIDS. In terms of biological role, the surface protein gp120 is a ligand for CD209/DC-SIGN and CLEC4M/DC-SIGNR, which are respectively found on dendritic cells (DCs), and on endothelial cells of liver sinusoids and lymph node sinuses. These interactions allow capture of viral particles at mucosal surfaces by these cells and subsequent transmission to permissive cells. DCs are professional antigen presenting cells, critical for host immunity by inducing specific immune responses against a broad variety of pathogens. They act as sentinels in various tissues where they take up antigen, process it, and present it to T-cells following migration to lymphoid organs. SIV subverts the migration properties of dendritic cells to gain access to CD4+ T-cells in lymph nodes. Virus transmission to permissive T-cells occurs either in trans (without DCs infection, through viral capture and transmission), or in cis (following DCs productive infection, through the usual CD4-gp120 interaction), thereby inducing a robust infection. In trans infection, bound virions remain infectious over days and it is proposed that they are not degraded, but protected in non-lysosomal acidic organelles within the DCs close to the cell membrane thus contributing to the viral infectious potential during DCs' migration from the periphery to the lymphoid tissues. On arrival at lymphoid tissues, intact virions recycle back to DCs' cell surface allowing virus transmission to CD4+ T-cells. Virion capture also seems to lead to MHC-II-restricted viral antigen presentation, and probably to the activation of SIV-specific CD4+ cells. The transmembrane protein gp41 (TM) acts as a class I viral fusion protein. Under the current model, the protein has at least 3 conformational states: pre-fusion native state, pre-hairpin intermediate state, and post-fusion hairpin state. During fusion of viral and target intracellular membranes, the coiled coil regions (heptad repeats) assume a trimer-of-hairpins structure, positioning the fusion peptide in close proximity to the C-terminal region of the ectodomain. The formation of this structure appears to drive apposition and subsequent fusion of viral and target cell membranes. Complete fusion occurs in host cell endosomes. The virus undergoes clathrin-dependent internalization long before endosomal fusion, thus minimizing the surface exposure of conserved viral epitopes during fusion and reducing the efficacy of inhibitors targeting these epitopes. Membranes fusion leads to delivery of the nucleocapsid into the cytoplasm. Functionally, the envelope glycoprotein gp160 precursor down-modulates cell surface CD4 antigen by interacting with it in the endoplasmic reticulum and blocking its transport to the cell surface. Its function is as follows. The gp120-gp41 heterodimer allows rapid transcytosis of the virus through CD4 negative cells such as simple epithelial monolayers of the intestinal, rectal and endocervical epithelial barriers. Both gp120 and gp41 specifically recognize glycosphingolipids galactosyl-ceramide (GalCer) or 3' sulfo-galactosyl-ceramide (GalS) present in the lipid rafts structures of epithelial cells. Binding to these alternative receptors allows the rapid transcytosis of the virus through the epithelial cells. This transcytotic vesicle-mediated transport of virions from the apical side to the basolateral side of the epithelial cells does not involve infection of the cells themselves. The protein is Envelope glycoprotein gp160 (env) of Simian immunodeficiency virus (isolate K6W) (SIV-mac).